A 210-amino-acid chain; its full sequence is DNA-directed RNA polymerases I, II, and III subunit RPABC1 (210 aa).

M1 carries the post-translational modification N-acetylmethionine. A Glycyl lysine isopeptide (Lys-Gly) (interchain with G-Cter in SUMO2) cross-link involves residue K81.

The protein belongs to the archaeal Rpo5/eukaryotic RPB5 RNA polymerase subunit family. In terms of assembly, component of the RNA polymerase I (Pol I), RNA polymerase II (Pol II) and RNA polymerase III (Pol III) complexes consisting of at least 13, 12 and 17 subunits, respectively. Pol I complex consists of a ten-subunit catalytic core composed of POLR1A/RPA1, POLR1B/RPA2, POLR1C/RPAC1, POLR1D/RPAC2, POLR1H/RPA12, POLR2E/RPABC1, POLR2F/RPABC2, POLR2H/RPABC3, POLR2K/RPABC4 and POLR2L/RPABC5; a mobile stalk subunit POLR1F/RPA43 protruding from the core and additional subunits homologous to general transcription factors POLR1E/RPA49 and POLR1G/RPA34. Part of Pol I pre-initiation complex (PIC), in which Pol I core assembles with RRN3 and promoter-bound UTBF and SL1/TIF-IB complex. Pol II complex contains a ten-subunit catalytic core composed of POLR2A/RPB1, POLR2B/RPB2, POLR2C/RPB3, POLR2I/RPB9, POLR2J/RPB11, POLR2E/RPABC1, POLR2F/RPABC2, POLR2H/RPABC3, POLR2K/RPABC4 and POLR2L/RPABC5 and a mobile stalk composed of two subunits POLR2D/RPB4 and POLR2G/RPB7. Part of Pol II(G) complex, in which Pol II core associates with an additional subunit POLR2M; unlike conventional Pol II, Pol II(G) functions as a transcriptional repressor. Part of TBP-based Pol II pre-initiation complex (PIC), in which Pol II core assembles with general transcription factors and other specific initiation factors including GTF2E1, GTF2E2, GTF2F1, GTF2F2, TCEA1, ERCC2, ERCC3, GTF2H2, GTF2H3, GTF2H4, GTF2H5, GTF2A1, GTF2A2, GTF2B and TBP; this large multi-subunit PIC complex mediates DNA unwinding and targets Pol II core to the transcription start site where the first phosphodiester bond forms. In Pol II complex, this subunit is present in 2-fold molar excess over the other subunits. Pol III complex consists of a ten-subunit catalytic core composed of POLR3A/RPC1, POLR3B/RPC2, POLR1C/RPAC1, POLR1D/RPAC2, POLR3K/RPC10, POLR2E/RPABC1, POLR2F/RPABC2, POLR2H/RPABC3, POLR2K/RPABC4 and POLR2L/RPABC5; a mobile stalk composed of two subunits POLR3H/RPC8 and CRCP/RPC9, protruding from the core and functioning primarily in transcription initiation; and additional subunits homologous to general transcription factors of the RNA polymerase II machinery, POLR3C/RPC3-POLR3F/RPC6-POLR3G/RPC7 heterotrimer required for transcription initiation and POLR3D/RPC4-POLR3E/RPC5 heterodimer involved in both transcription initiation and termination. Component of the PAQosome complex which is responsible for the biogenesis of several protein complexes and which consists of R2TP complex members RUVBL1, RUVBL2, RPAP3 and PIH1D1, URI complex members PFDN2, PFDN6, PDRG1, UXT and URI1 as well as ASDURF, POLR2E and DNAAF10/WDR92. Interacts with URI1.

Its subcellular location is the nucleus. It is found in the nucleolus. DNA-dependent RNA polymerase catalyzes the transcription of DNA into RNA using the four ribonucleoside triphosphates as substrates. Common component of RNA polymerases I, II and III which synthesize ribosomal RNA precursors, mRNA precursors and many functional non-coding RNAs, and small RNAs, such as 5S rRNA and tRNAs, respectively. Pol II is the central component of the basal RNA polymerase II transcription machinery. Pols are composed of mobile elements that move relative to each other. In Pol II, POLR2E/RPABC1 is part of the lower jaw surrounding the central large cleft and thought to grab the incoming DNA template. Seems to be the major component in this process. The sequence is that of DNA-directed RNA polymerases I, II, and III subunit RPABC1 from Mus musculus (Mouse).